We begin with the raw amino-acid sequence, 427 residues long: Proline--tRNA ligase (427 aa).

It belongs to the class-II aminoacyl-tRNA synthetase family. ProS type 2 subfamily. Homodimer.

The protein resides in the cytoplasm. The catalysed reaction is tRNA(Pro) + L-proline + ATP = L-prolyl-tRNA(Pro) + AMP + diphosphate. Its function is as follows. Catalyzes the attachment of proline to tRNA(Pro) in a two-step reaction: proline is first activated by ATP to form Pro-AMP and then transferred to the acceptor end of tRNA(Pro). This chain is Proline--tRNA ligase, found in Rickettsia akari (strain Hartford).